We begin with the raw amino-acid sequence, 232 residues long: Ribosomal RNA small subunit methyltransferase G (232 aa).

S-adenosyl-L-methionine-binding positions include G93, L98, 144–145 (VE), and R163.

It belongs to the methyltransferase superfamily. RNA methyltransferase RsmG family.

The protein resides in the cytoplasm. It carries out the reaction guanosine(527) in 16S rRNA + S-adenosyl-L-methionine = N(7)-methylguanosine(527) in 16S rRNA + S-adenosyl-L-homocysteine. In terms of biological role, specifically methylates the N7 position of guanine in position 527 of 16S rRNA. This is Ribosomal RNA small subunit methyltransferase G from Burkholderia pseudomallei (strain 1710b).